We begin with the raw amino-acid sequence, 138 residues long: ATP synthase epsilon chain (138 aa).

It belongs to the ATPase epsilon chain family. In terms of assembly, F-type ATPases have 2 components, CF(1) - the catalytic core - and CF(0) - the membrane proton channel. CF(1) has five subunits: alpha(3), beta(3), gamma(1), delta(1), epsilon(1). CF(0) has three main subunits: a, b and c.

The protein resides in the cell inner membrane. Functionally, produces ATP from ADP in the presence of a proton gradient across the membrane. This is ATP synthase epsilon chain from Psychrobacter arcticus (strain DSM 17307 / VKM B-2377 / 273-4).